A 101-amino-acid polypeptide reads, in one-letter code: Protein Tat (101 aa).

The interaction with human CREBBP stretch occupies residues 1–24; the sequence is MEPVDPNLEPWKHPGSQPRTACTN. A transactivation region spans residues 1 to 48; sequence MEPVDPNLEPWKHPGSQPRTACTNCYCKKCCFHCQVCFITKGLGISYG. Positions 22, 25, and 27 each coordinate Zn(2+). The cysteine-rich stretch occupies residues 22–37; the sequence is CTNCYCKKCCFHCQVC. Lys-28 is subject to N6-acetyllysine; by host PCAF. The Zn(2+) site is built by Cys-30, His-33, Cys-34, and Cys-37. The tract at residues 38–48 is core; sequence FITKGLGISYG. A disordered region spans residues 48-101; that stretch reads GRKKRRQRQRAPDSSQNHQDSLSKQPSSQPRGDPTGPKESKKEVERETETDPLD. A Nuclear localization signal, RNA-binding (TAR), and protein transduction motif is present at residues 49 to 57; the sequence is RKKRRQRQR. Residues 49–86 form an interaction with the host capping enzyme RNGTT region; it reads RKKRRQRQRAPDSSQNHQDSLSKQPSSQPRGDPTGPKE. Residues Lys-50 and Lys-51 each carry the N6-acetyllysine; by host EP300 and GCN5L2 modification. Asymmetric dimethylarginine; by host PRMT6 occurs at positions 52 and 53. The span at 59 to 77 shows a compositional bias: polar residues; sequence PDSSQNHQDSLSKQPSSQP. Lys-71 participates in a covalent cross-link: Glycyl lysine isopeptide (Lys-Gly) (interchain with G-Cter in ubiquitin). Residues 78 to 80 carry the Cell attachment site motif; it reads RGD. A compositionally biased stretch (basic and acidic residues) spans 83–101; sequence GPKESKKEVERETETDPLD.

The protein belongs to the lentiviruses Tat family. As to quaternary structure, interacts with host CCNT1. Associates with the P-TEFb complex composed at least of Tat, P-TEFb (CDK9 and CCNT1), TAR RNA, RNA Pol II. Recruits the HATs CREBBP, TAF1/TFIID, EP300, PCAF and GCN5L2. Interacts with host KAT5/Tip60; this interaction targets the latter to degradation. Interacts with the host deacetylase SIRT1. Interacts with host capping enzyme RNGTT; this interaction stimulates RNGTT. Binds to host KDR, and to the host integrins ITGAV/ITGB3 and ITGA5/ITGB1. Interacts with host KPNB1/importin beta-1 without previous binding to KPNA1/importin alpha-1. Interacts with EIF2AK2. Interacts with host nucleosome assembly protein NAP1L1; this interaction may be required for the transport of Tat within the nucleus, since the two proteins interact at the nuclear rim. Interacts with host C1QBP/SF2P32; this interaction involves lysine-acetylated Tat. Interacts with the host chemokine receptors CCR2, CCR3 and CXCR4. Interacts with host DPP4/CD26; this interaction may trigger an anti-proliferative effect. Interacts with host LDLR. Interacts with the host extracellular matrix metalloproteinase MMP1. Interacts with host PRMT6; this interaction mediates Tat's methylation. Interacts with, and is ubiquitinated by MDM2/Hdm2. Interacts with host PSMC3 and HTATIP2. Interacts with STAB1; this interaction may overcome SATB1-mediated repression of IL2 and IL2RA (interleukin) in T cells by binding to the same domain than HDAC1. Interacts (when acetylated) with human CDK13, thereby increasing HIV-1 mRNA splicing and promoting the production of the doubly spliced HIV-1 protein Nef. Interacts with host TBP; this interaction modulates the activity of transcriptional pre-initiation complex. Interacts with host RELA. Interacts with host PLSCR1; this interaction negatively regulates Tat transactivation activity by altering its subcellular distribution. Asymmetrical arginine methylation by host PRMT6 seems to diminish the transactivation capacity of Tat and affects the interaction with host CCNT1. In terms of processing, acetylation by EP300, CREBBP, GCN5L2/GCN5 and PCAF regulates the transactivation activity of Tat. EP300-mediated acetylation of Lys-50 promotes dissociation of Tat from the TAR RNA through the competitive binding to PCAF's bromodomain. In addition, the non-acetylated Tat's N-terminus can also interact with PCAF. PCAF-mediated acetylation of Lys-28 enhances Tat's binding to CCNT1. Lys-50 is deacetylated by SIRT1. Post-translationally, polyubiquitination by host MDM2 does not target Tat to degradation, but activates its transactivation function and fosters interaction with CCNT1 and TAR RNA. Phosphorylated by EIF2AK2 on serine and threonine residues adjacent to the basic region important for TAR RNA binding and function. Phosphorylation of Tat by EIF2AK2 is dependent on the prior activation of EIF2AK2 by dsRNA.

It is found in the host nucleus. The protein resides in the host nucleolus. It localises to the host cytoplasm. Its subcellular location is the secreted. In terms of biological role, transcriptional activator that increases RNA Pol II processivity, thereby increasing the level of full-length viral transcripts. Recognizes a hairpin structure at the 5'-LTR of the nascent viral mRNAs referred to as the transactivation responsive RNA element (TAR) and recruits the cyclin T1-CDK9 complex (P-TEFb complex) that will in turn hyperphosphorylate the RNA polymerase II to allow efficient elongation. The CDK9 component of P-TEFb and other Tat-activated kinases hyperphosphorylate the C-terminus of RNA Pol II that becomes stabilized and much more processive. Other factors such as HTATSF1/Tat-SF1, SUPT5H/SPT5, and HTATIP2 are also important for Tat's function. Besides its effect on RNA Pol II processivity, Tat induces chromatin remodeling of proviral genes by recruiting the histone acetyltransferases (HATs) CREBBP, EP300 and PCAF to the chromatin. This also contributes to the increase in proviral transcription rate, especially when the provirus integrates in transcriptionally silent region of the host genome. To ensure maximal activation of the LTR, Tat mediates nuclear translocation of NF-kappa-B by interacting with host RELA. Through its interaction with host TBP, Tat may also modulate transcription initiation. Tat can reactivate a latently infected cell by penetrating in it and transactivating its LTR promoter. In the cytoplasm, Tat is thought to act as a translational activator of HIV-1 mRNAs. Its function is as follows. Extracellular circulating Tat can be endocytosed by surrounding uninfected cells via the binding to several surface receptors such as CD26, CXCR4, heparan sulfate proteoglycans (HSPG) or LDLR. Neurons are rarely infected, but they internalize Tat via their LDLR. Through its interaction with nuclear HATs, Tat is potentially able to control the acetylation-dependent cellular gene expression. Modulates the expression of many cellular genes involved in cell survival, proliferation or in coding for cytokines or cytokine receptors. Tat plays a role in T-cell and neurons apoptosis. Tat induced neurotoxicity and apoptosis probably contribute to neuroAIDS. Circulating Tat also acts as a chemokine-like and/or growth factor-like molecule that binds to specific receptors on the surface of the cells, affecting many cellular pathways. In the vascular system, Tat binds to ITGAV/ITGB3 and ITGA5/ITGB1 integrins dimers at the surface of endothelial cells and competes with bFGF for heparin-binding sites, leading to an excess of soluble bFGF. The chain is Protein Tat from Human immunodeficiency virus type 1 group M subtype B (isolate SF33) (HIV-1).